The following is a 275-amino-acid chain: NADPH-dependent 7-cyano-7-deazaguanine reductase (275 aa).

Ile81–Ser83 contacts substrate. Ser83–Lys84 serves as a coordination point for NADPH. Residue Cys181 is the Thioimide intermediate of the active site. The active-site Proton donor is Asp188. A substrate-binding site is contributed by His220–Glu221. Arg249–Gly250 provides a ligand contact to NADPH.

It belongs to the GTP cyclohydrolase I family. QueF type 2 subfamily. Homodimer.

The protein resides in the cytoplasm. It catalyses the reaction 7-aminomethyl-7-carbaguanine + 2 NADP(+) = 7-cyano-7-deazaguanine + 2 NADPH + 3 H(+). It participates in tRNA modification; tRNA-queuosine biosynthesis. Functionally, catalyzes the NADPH-dependent reduction of 7-cyano-7-deazaguanine (preQ0) to 7-aminomethyl-7-deazaguanine (preQ1). The chain is NADPH-dependent 7-cyano-7-deazaguanine reductase from Xylella fastidiosa (strain M12).